Reading from the N-terminus, the 153-residue chain is SsrA-binding protein (153 aa).

This sequence belongs to the SmpB family.

The protein resides in the cytoplasm. Required for rescue of stalled ribosomes mediated by trans-translation. Binds to transfer-messenger RNA (tmRNA), required for stable association of tmRNA with ribosomes. tmRNA and SmpB together mimic tRNA shape, replacing the anticodon stem-loop with SmpB. tmRNA is encoded by the ssrA gene; the 2 termini fold to resemble tRNA(Ala) and it encodes a 'tag peptide', a short internal open reading frame. During trans-translation Ala-aminoacylated tmRNA acts like a tRNA, entering the A-site of stalled ribosomes, displacing the stalled mRNA. The ribosome then switches to translate the ORF on the tmRNA; the nascent peptide is terminated with the 'tag peptide' encoded by the tmRNA and targeted for degradation. The ribosome is freed to recommence translation, which seems to be the essential function of trans-translation. The polypeptide is SsrA-binding protein (Paramagnetospirillum magneticum (strain ATCC 700264 / AMB-1) (Magnetospirillum magneticum)).